The chain runs to 401 residues: tRNA(Met) cytidine acetate ligase (401 aa).

ATP is bound by residues 7 to 20, glycine 102, asparagine 164, and arginine 189; that span reads IVEY…HLYH.

The protein belongs to the TmcAL family.

The protein localises to the cytoplasm. It catalyses the reaction cytidine(34) in elongator tRNA(Met) + acetate + ATP = N(4)-acetylcytidine(34) in elongator tRNA(Met) + AMP + diphosphate. Functionally, catalyzes the formation of N(4)-acetylcytidine (ac(4)C) at the wobble position of elongator tRNA(Met), using acetate and ATP as substrates. First activates an acetate ion to form acetyladenylate (Ac-AMP) and then transfers the acetyl group to tRNA to form ac(4)C34. The sequence is that of tRNA(Met) cytidine acetate ligase from Caldanaerobacter subterraneus subsp. tengcongensis (strain DSM 15242 / JCM 11007 / NBRC 100824 / MB4) (Thermoanaerobacter tengcongensis).